The sequence spans 365 residues: Transcription factor KUA1 (365 aa).

A disordered region spans residues 1–21 (MTRRCSHCNHNGHNSRTCPNR). Residues 3–20 (RRCSHCNHNGHNSRTCPN) form a CCHC-type zinc finger. Polar residues predominate over residues 8-18 (CNHNGHNSRTC). The R/KLFGV (transcriptional repression) signature appears at 24-28 (KLFGV). A disordered region spans residues 41–99 (MGNLSHYTGSGSGGHGTGSNTPGSPGDVPDHVAGDGYASEDFVAGSSSSRERKKGTPWT). The region spanning 90 to 146 (RERKKGTPWTEEEHRMFLLGLQKLGKGDWRGISRNYVTTRTPTQVASHAQKYFIRQS) is the HTH myb-type domain. Positions 118–142 (WRGISRNYVTTRTPTQVASHAQKYF) form a DNA-binding region, H-T-H motif. Disordered stretches follow at residues 214–254 (SMDS…QPQL) and 321–365 (ESNK…IHAL). The segment covering 220 to 254 (STTGEPTATAAAASSSSRLEETTQLQSQLQPQPQL) has biased composition (low complexity). Polar residues predominate over residues 343–355 (RQSAFHPNPSSDS).

In terms of tissue distribution, expressed ubiquitously, except in hypocotyls, root tips and lateral root primordia.

It is found in the nucleus. Functionally, transcriptional repressor. Direct regulator of the transcription of peroxidase (Prxs) and reactive oxygen species (ROS)-related genes via the recognition of 5'-ATCACA-3' motif. Binds to 5'-TATCCA-3' motif (TA box) and represses the activity of corresponding promoters (e.g. sugar response genes). Regulates hypocotyl elongation in response to darkness by enhancing auxin accumulation in a phytochrome-interacting factor (PIF) proteins-dependent manner. Promotes lateral roots formation. Promotes cell expansion during leaves development via the modulation of cell wall-located Prxs. Plays a critical role in developmentally regulated and dark-induced onset of leaf senescence by repressing the transcription of several genes involved in chloroplast function and responses to light and auxin. Promotes responses to auxin, abscisic acid (ABA), and ethylene. This chain is Transcription factor KUA1, found in Arabidopsis thaliana (Mouse-ear cress).